The following is a 404-amino-acid chain: Formate-dependent phosphoribosylglycinamide formyltransferase (404 aa).

Residues 25–26 (EL) and E85 contribute to the N(1)-(5-phospho-beta-D-ribosyl)glycinamide site. ATP is bound by residues R118, K159, 164–169 (SSGKGQ), 199–202 (EGFI), and E207. Residues 123–318 (RLAAEELGLP…EFELHARAIL (196 aa)) enclose the ATP-grasp domain. Positions 277 and 289 each coordinate Mg(2+). N(1)-(5-phospho-beta-D-ribosyl)glycinamide is bound by residues D296, K365, and 372–373 (RR).

It belongs to the PurK/PurT family. Homodimer.

The catalysed reaction is N(1)-(5-phospho-beta-D-ribosyl)glycinamide + formate + ATP = N(2)-formyl-N(1)-(5-phospho-beta-D-ribosyl)glycinamide + ADP + phosphate + H(+). The protein operates within purine metabolism; IMP biosynthesis via de novo pathway; N(2)-formyl-N(1)-(5-phospho-D-ribosyl)glycinamide from N(1)-(5-phospho-D-ribosyl)glycinamide (formate route): step 1/1. Its function is as follows. Involved in the de novo purine biosynthesis. Catalyzes the transfer of formate to 5-phospho-ribosyl-glycinamide (GAR), producing 5-phospho-ribosyl-N-formylglycinamide (FGAR). Formate is provided by PurU via hydrolysis of 10-formyl-tetrahydrofolate. The chain is Formate-dependent phosphoribosylglycinamide formyltransferase from Burkholderia pseudomallei (strain 1106a).